A 475-amino-acid chain; its full sequence is Alpha,alpha-trehalose-phosphate synthase [UDP-forming] (475 aa).

Residues Tyr-93 and Asp-147 each coordinate D-glucose 6-phosphate. Positions 285 and 290 each coordinate UDP. 2 residues coordinate UDP-alpha-D-glucose: Arg-285 and Lys-290. Position 323 (Arg-323) interacts with D-glucose 6-phosphate. 384–392 provides a ligand contact to UDP-alpha-D-glucose; the sequence is DGMNLVSYE. Residue 388–392 participates in UDP binding; the sequence is LVSYE.

Belongs to the glycosyltransferase 20 family.

The catalysed reaction is D-glucose 6-phosphate + UDP-alpha-D-glucose = alpha,alpha-trehalose 6-phosphate + UDP + H(+). The protein operates within carbohydrate biosynthesis. Its function is as follows. Synthase catalytic subunit of the trehalose synthase complex that catalyzes the production of trehalose from glucose-6-phosphate and UDP-alpha-D-glucose in a two step process. The protein is Alpha,alpha-trehalose-phosphate synthase [UDP-forming] of Pichia angusta (Yeast).